A 238-amino-acid chain; its full sequence is Probable transcriptional regulatory protein LACR_0237 (238 aa).

Belongs to the TACO1 family. YeeN subfamily.

The protein resides in the cytoplasm. The protein is Probable transcriptional regulatory protein LACR_0237 of Lactococcus lactis subsp. cremoris (strain SK11).